Reading from the N-terminus, the 397-residue chain is Tryptophan synthase beta chain (397 aa).

Lysine 87 is subject to N6-(pyridoxal phosphate)lysine.

It belongs to the TrpB family. Tetramer of two alpha and two beta chains. Pyridoxal 5'-phosphate serves as cofactor.

It catalyses the reaction (1S,2R)-1-C-(indol-3-yl)glycerol 3-phosphate + L-serine = D-glyceraldehyde 3-phosphate + L-tryptophan + H2O. It functions in the pathway amino-acid biosynthesis; L-tryptophan biosynthesis; L-tryptophan from chorismate: step 5/5. In terms of biological role, the beta subunit is responsible for the synthesis of L-tryptophan from indole and L-serine. This chain is Tryptophan synthase beta chain, found in Salmonella arizonae (strain ATCC BAA-731 / CDC346-86 / RSK2980).